The following is a 312-amino-acid chain: Heme oxygenase 2 (312 aa).

An N-acetylserine modification is found at serine 2. The residue at position 2 (serine 2) is a Phosphoserine. Histidine 41 provides a ligand contact to heme b. HRM repeat units follow at residues 260–265 (KCPYYA) and 277–282 (SCPFRA). 2 positions are modified to S-nitrosocysteine: cysteine 261 and cysteine 278.

It belongs to the heme oxygenase family. S-nitrosylated by BLVRB.

The protein localises to the microsome. It is found in the endoplasmic reticulum. It catalyses the reaction heme b + 3 reduced [NADPH--hemoprotein reductase] + 3 O2 = biliverdin IXalpha + CO + Fe(2+) + 3 oxidized [NADPH--hemoprotein reductase] + 3 H2O + H(+). Its function is as follows. Heme oxygenase cleaves the heme ring at the alpha methene bridge to form biliverdin. Biliverdin is subsequently converted to bilirubin by biliverdin reductase. Under physiological conditions, the activity of heme oxygenase is highest in the spleen, where senescent erythrocytes are sequestrated and destroyed. Heme oxygenase 2 could be implicated in the production of carbon monoxide in brain where it could act as a neurotransmitter. This Oryctolagus cuniculus (Rabbit) protein is Heme oxygenase 2 (HMOX2).